A 464-amino-acid chain; its full sequence is Fumarate hydratase class II (464 aa).

Substrate-binding positions include S100–T102, H131–D134, S141–N143, and T189. The Proton donor/acceptor role is filled by H190. Residue S320 is part of the active site. Substrate is bound by residues S321 and K326–N328.

Belongs to the class-II fumarase/aspartase family. Fumarase subfamily. Homotetramer.

Its subcellular location is the cytoplasm. It carries out the reaction (S)-malate = fumarate + H2O. Its pathway is carbohydrate metabolism; tricarboxylic acid cycle; (S)-malate from fumarate: step 1/1. In terms of biological role, involved in the TCA cycle. Catalyzes the stereospecific interconversion of fumarate to L-malate. This is Fumarate hydratase class II from Deinococcus radiodurans (strain ATCC 13939 / DSM 20539 / JCM 16871 / CCUG 27074 / LMG 4051 / NBRC 15346 / NCIMB 9279 / VKM B-1422 / R1).